Consider the following 901-residue polypeptide: Valine--tRNA ligase (901 aa).

A disordered region spans residues 1-37 (MLPGCYTHRLNMSDTQDPPQDESTTDESADALDGEYD). Positions 19 to 35 (PQDESTTDESADALDGE) are enriched in acidic residues. Residues 72–82 (PTVSGNLHMGH) carry the 'HIGH' region motif. The short motif at 572–576 (AMSKS) is the 'KMSKS' region element. K575 provides a ligand contact to ATP.

This sequence belongs to the class-I aminoacyl-tRNA synthetase family. ValS type 2 subfamily.

It localises to the cytoplasm. The catalysed reaction is tRNA(Val) + L-valine + ATP = L-valyl-tRNA(Val) + AMP + diphosphate. Functionally, catalyzes the attachment of valine to tRNA(Val). As ValRS can inadvertently accommodate and process structurally similar amino acids such as threonine, to avoid such errors, it has a 'posttransfer' editing activity that hydrolyzes mischarged Thr-tRNA(Val) in a tRNA-dependent manner. This Haloarcula marismortui (strain ATCC 43049 / DSM 3752 / JCM 8966 / VKM B-1809) (Halobacterium marismortui) protein is Valine--tRNA ligase.